We begin with the raw amino-acid sequence, 99 residues long: UPF0235 protein Avin_03050 (99 aa).

Positions 66–99 (VSLESGESNRQKRVRIRRPRQLPALPGLAPRPDA) are disordered. The span at 76–85 (QKRVRIRRPR) shows a compositional bias: basic residues.

Belongs to the UPF0235 family.

The sequence is that of UPF0235 protein Avin_03050 from Azotobacter vinelandii (strain DJ / ATCC BAA-1303).